The following is a 359-amino-acid chain: Phospho-N-acetylmuramoyl-pentapeptide-transferase (359 aa).

Helical transmembrane passes span 27 to 47 (GAFF…INAL), 70 to 90 (TPTM…LLWA), 97 to 117 (VWLV…DDWA), 133 to 153 (LAIG…VHPE), 167 to 187 (VLLN…VGSA), 198 to 218 (GLAI…AYAV), 238 to 258 (LLIF…YNAP), 261 to 281 (AVFM…AIAV), 287 to 307 (IVLA…IVQV), and 336 to 356 (QVVI…LATL).

It belongs to the glycosyltransferase 4 family. MraY subfamily. The cofactor is Mg(2+).

Its subcellular location is the cell inner membrane. It catalyses the reaction UDP-N-acetyl-alpha-D-muramoyl-L-alanyl-gamma-D-glutamyl-meso-2,6-diaminopimeloyl-D-alanyl-D-alanine + di-trans,octa-cis-undecaprenyl phosphate = di-trans,octa-cis-undecaprenyl diphospho-N-acetyl-alpha-D-muramoyl-L-alanyl-D-glutamyl-meso-2,6-diaminopimeloyl-D-alanyl-D-alanine + UMP. It functions in the pathway cell wall biogenesis; peptidoglycan biosynthesis. Its function is as follows. Catalyzes the initial step of the lipid cycle reactions in the biosynthesis of the cell wall peptidoglycan: transfers peptidoglycan precursor phospho-MurNAc-pentapeptide from UDP-MurNAc-pentapeptide onto the lipid carrier undecaprenyl phosphate, yielding undecaprenyl-pyrophosphoryl-MurNAc-pentapeptide, known as lipid I. The protein is Phospho-N-acetylmuramoyl-pentapeptide-transferase of Jannaschia sp. (strain CCS1).